The sequence spans 629 residues: tRNA uridine 5-carboxymethylaminomethyl modification enzyme MnmG (629 aa).

FAD is bound by residues 13–18 (GGGHAG), Val125, and Ser180. Residue 273 to 287 (GPRYCPSIEDKIHRF) participates in NAD(+) binding. Residue Gln370 participates in FAD binding.

It belongs to the MnmG family. As to quaternary structure, homodimer. Heterotetramer of two MnmE and two MnmG subunits. FAD serves as cofactor.

The protein resides in the cytoplasm. Its function is as follows. NAD-binding protein involved in the addition of a carboxymethylaminomethyl (cmnm) group at the wobble position (U34) of certain tRNAs, forming tRNA-cmnm(5)s(2)U34. The polypeptide is tRNA uridine 5-carboxymethylaminomethyl modification enzyme MnmG (Shewanella sp. (strain ANA-3)).